An 887-amino-acid chain; its full sequence is Translation initiation factor IF-2 (887 aa).

Disordered stretches follow at residues 31–87 (KLAQ…PRRI), 94–113 (SFVS…DSDA), and 129–285 (VETE…KWRK). Positions 42–59 (SSSEKPSTKVPEKIAKEK) are enriched in basic and acidic residues. 2 stretches are compositionally biased toward basic and acidic residues: residues 150–171 (VVAK…KEPP) and 199–212 (PKKE…EKTK). Over residues 213-223 (TTQTKPQQSSD) the composition is skewed to low complexity. Residues 241–273 (YRRDVSKKSGSDFRDRAKKDDNPKAFTGRDRYG) show a composition bias toward basic and acidic residues. The tr-type G domain occupies 393 to 562 (TRPPIVAFMG…ALQAEVLELK (170 aa)). Residues 402–409 (GHVDHGKT) form a G1 region. 402–409 (GHVDHGKT) is a GTP binding site. Positions 427–431 (AITQH) are G2. A G3 region spans residues 448 to 451 (DTPG). GTP is bound by residues 448–452 (DTPGH) and 502–505 (NKCD). The tract at residues 502-505 (NKCD) is G4. The segment at 538–540 (SAK) is G5.

It belongs to the TRAFAC class translation factor GTPase superfamily. Classic translation factor GTPase family. IF-2 subfamily.

The protein localises to the cytoplasm. Functionally, one of the essential components for the initiation of protein synthesis. Protects formylmethionyl-tRNA from spontaneous hydrolysis and promotes its binding to the 30S ribosomal subunits. Also involved in the hydrolysis of GTP during the formation of the 70S ribosomal complex. The polypeptide is Translation initiation factor IF-2 (Chlamydia caviae (strain ATCC VR-813 / DSM 19441 / 03DC25 / GPIC) (Chlamydophila caviae)).